The primary structure comprises 191 residues: Bcl-2-like protein 10 (191 aa).

Positions 79–98 (LSKDQDFSWSQLVMLLAFAG) match the BH1 motif. Residue Lys112 forms a Glycyl lysine isopeptide (Lys-Gly) (interchain with G-Cter in ubiquitin) linkage. The BH2 signature appears at 144 to 155 (RLEALGGWDGFC). The chain crosses the membrane as a helical span at residues 166–183 (FWRRLLIQAFLSGFFATA).

The protein belongs to the Bcl-2 family. Interacts with BAX. Interacts with BCL2 and BCL2L1/BCLX. Interacts with APAF1. Interacts with ITPR1, ITPR2 and ITPR3; the interaction with ITPR1 is increased in the presence of AHCLY1. Interacts with AHCYL1. Interacts with HIP1R (via ENTH and I/LWEQ domains). Interacts with CASP9. Interacts with BCL2L11/BIM. Interacts with BIK. Interacts with UBQLN4. Interacts with NME2/NM23-H2. Interacts with PMAIP1/NOXA. Interacts with TPX2. Interacts with UBQLN1; in the cytoplasm. Interacts (via BH1 domain) with BECN1. Requires Ca(2+) as cofactor. Monoubiquitinated by UBQLN1; results in stabilization of BCL2L10 protein abundance and in relocalization from mitochondria to cytoplasm. As to expression, expressed in multiple embryonic tissues. Restricted to the ovary and testis in adult mice.

It is found in the mitochondrion. It localises to the nucleus membrane. Its subcellular location is the endoplasmic reticulum. The protein localises to the cytoplasm. The protein resides in the cytoskeleton. It is found in the spindle. Promotes cell survival by suppressing apoptosis induced by BAX but not BAK. Increases binding of AHCYL1/IRBIT to ITPR1. Reduces ITPR1-mediated calcium release from the endoplasmic reticulum cooperatively with AHCYL1/IRBIT under normal cellular conditions. Under apoptotic stress conditions, dissociates from ITPR1 and is displaced from mitochondria-associated endoplasmic reticulum membranes, leading to increased Ca(2+) transfer to mitochondria which promotes apoptosis. Required for the correct formation of the microtubule organizing center during oocyte cell division, potentially via regulation of protein abundance and localization of other microtubule organizing center components such as AURKA and TPX2. The sequence is that of Bcl-2-like protein 10 from Mus musculus (Mouse).